Reading from the N-terminus, the 156-residue chain is Large ribosomal subunit protein eL24 (156 aa).

Over residues 110-129 (KESKAKKQETQAAKKAEKAK) the composition is skewed to basic and acidic residues. Residues 110–156 (KESKAKKQETQAAKKAEKAKNAANPKARVTSKQGAKGAPVKVAAKSR) form a disordered region. Positions 130-156 (NAANPKARVTSKQGAKGAPVKVAAKSR) are enriched in low complexity.

This sequence belongs to the eukaryotic ribosomal protein eL24 family. In terms of assembly, component of the large ribosomal subunit (LSU). Mature N.crassa ribosomes consist of a small (40S) and a large (60S) subunit. The 40S small subunit contains 1 molecule of ribosomal RNA (18S rRNA) and at least 32 different proteins. The large 60S subunit contains 3 rRNA molecules (26S, 5.8S and 5S rRNA) and at least 42 different proteins.

It is found in the cytoplasm. In terms of biological role, component of the ribosome, a large ribonucleoprotein complex responsible for the synthesis of proteins in the cell. The small ribosomal subunit (SSU) binds messenger RNAs (mRNAs) and translates the encoded message by selecting cognate aminoacyl-transfer RNA (tRNA) molecules. The large subunit (LSU) contains the ribosomal catalytic site termed the peptidyl transferase center (PTC), which catalyzes the formation of peptide bonds, thereby polymerizing the amino acids delivered by tRNAs into a polypeptide chain. The nascent polypeptides leave the ribosome through a tunnel in the LSU and interact with protein factors that function in enzymatic processing, targeting, and the membrane insertion of nascent chains at the exit of the ribosomal tunnel. This is Large ribosomal subunit protein eL24 (rpl-24) from Neurospora crassa (strain ATCC 24698 / 74-OR23-1A / CBS 708.71 / DSM 1257 / FGSC 987).